A 507-amino-acid polypeptide reads, in one-letter code: MFS transporter fsa7 (507 aa).

The interval 1-65 (MATKDPAVTT…PDDPEHPLNW (65 aa)) is disordered. A glycan (N-linked (GlcNAc...) asparagine) is linked at Asn64. A helical transmembrane segment spans residues 72 to 92 (LHLVIVSLFTLAANLAATMFA). A glycan (N-linked (GlcNAc...) asparagine) is linked at Asn106. 5 helical membrane-spanning segments follow: residues 111–131 (AMTV…LAPL), 146–166 (FVYI…MFLV), 169–189 (IICG…VADL), 200–220 (ALFT…GGFV), and 228–248 (WTFR…VIFM). Asn252 carries an N-linked (GlcNAc...) asparagine glycan. Transmembrane regions (helical) follow at residues 302–322 (PIVL…FLLF), 341–361 (GLAY…FSVL), 379–399 (LILM…YGWT), 406–426 (WIVP…VVIP), 429–449 (IYLV…ANLL), and 472–492 (GWGN…PWFF).

This sequence belongs to the major facilitator superfamily.

Its subcellular location is the cell membrane. Its function is as follows. Efflux pump that might be required for efficient secretion of fusarisetin A or other secondary metabolies produced by the fusarisetin A gene cluster. This chain is MFS transporter fsa7, found in Fusarium sp. (strain FN080326).